Reading from the N-terminus, the 329-residue chain is MVNNIDFVVTWVNGNDPVWREEKKKYEVLDGRPTLNDETRYRDMDLFQYWFRAVEKHAPWVNNIYFITYGHLPEWLDANHPKLKIVKHEDYIPKEYLPTFSSNVIELNLFRIKELSEQFVLFSDDVFINTFLKEEDLFKNNLPRLLSIYRPLIPTKEFDYINFNHLLIMNRYFHDKKTLSQHKGKFFNVGYGKFNLYNLFSIFYSGIIGYHDAHVAMPHLKSTFAEIWNKEGVLLDRVCKNKFRSTKDVNHWLMSYWNIETNSFMPQTLRVGEYVPLAYSGKIESIIHKQKNKFLCINDDEHTENFINEVNFVRKIFEKKFPEKSKFEK.

Belongs to the stealth family.

This chain is Capsular polysaccharide phosphotransferase WcwK (wcwK), found in Streptococcus pneumoniae.